The sequence spans 514 residues: Peptide chain release factor 3 (514 aa).

A tr-type G domain is found at 8 to 268 (KKRRTFAIIS…TFLEFAPEPH (261 aa)). GTP is bound by residues 17–24 (SHPDAGKT), 85–89 (DTPGH), and 139–142 (NKLD).

Belongs to the TRAFAC class translation factor GTPase superfamily. Classic translation factor GTPase family. PrfC subfamily.

Its subcellular location is the cytoplasm. In terms of biological role, increases the formation of ribosomal termination complexes and stimulates activities of RF-1 and RF-2. It binds guanine nucleotides and has strong preference for UGA stop codons. It may interact directly with the ribosome. The stimulation of RF-1 and RF-2 is significantly reduced by GTP and GDP, but not by GMP. This chain is Peptide chain release factor 3, found in Streptococcus pyogenes serotype M2 (strain MGAS10270).